A 128-amino-acid chain; its full sequence is Large ribosomal subunit protein bL17 (128 aa).

It belongs to the bacterial ribosomal protein bL17 family. In terms of assembly, part of the 50S ribosomal subunit. Contacts protein L32.

This chain is Large ribosomal subunit protein bL17, found in Streptococcus pyogenes serotype M49 (strain NZ131).